A 293-amino-acid polypeptide reads, in one-letter code: Large ribosomal subunit protein uL18 (293 aa).

The disordered stretch occupies residues 249 to 273 (DASPAAKKAAKPSKRHTAKRLTYDE). The span at 256–267 (KAAKPSKRHTAK) shows a compositional bias: basic residues.

This sequence belongs to the universal ribosomal protein uL18 family. Component of the large ribosomal subunit (LSU).

It is found in the cytoplasm. The protein resides in the nucleus. Component of the ribosome, a large ribonucleoprotein complex responsible for the synthesis of proteins in the cell. The small ribosomal subunit (SSU) binds messenger RNAs (mRNAs) and translates the encoded message by selecting cognate aminoacyl-transfer RNA (tRNA) molecules. The large subunit (LSU) contains the ribosomal catalytic site termed the peptidyl transferase center (PTC), which catalyzes the formation of peptide bonds, thereby polymerizing the amino acids delivered by tRNAs into a polypeptide chain. The nascent polypeptides leave the ribosome through a tunnel in the LSU and interact with protein factors that function in enzymatic processing, targeting, and the membrane insertion of nascent chains at the exit of the ribosomal tunnel. In Caenorhabditis elegans, this protein is Large ribosomal subunit protein uL18 (rpl-5).